A 137-amino-acid chain; its full sequence is Nucleoside diphosphate kinase (137 aa).

Residues Lys10, Phe59, Arg87, Thr93, Arg104, and Asn114 each contribute to the ATP site. His117 (pros-phosphohistidine intermediate) is an active-site residue.

This sequence belongs to the NDK family. As to quaternary structure, homotetramer. Requires Mg(2+) as cofactor.

The protein localises to the cytoplasm. The enzyme catalyses a 2'-deoxyribonucleoside 5'-diphosphate + ATP = a 2'-deoxyribonucleoside 5'-triphosphate + ADP. The catalysed reaction is a ribonucleoside 5'-diphosphate + ATP = a ribonucleoside 5'-triphosphate + ADP. Functionally, major role in the synthesis of nucleoside triphosphates other than ATP. The ATP gamma phosphate is transferred to the NDP beta phosphate via a ping-pong mechanism, using a phosphorylated active-site intermediate. This is Nucleoside diphosphate kinase from Streptomyces avermitilis (strain ATCC 31267 / DSM 46492 / JCM 5070 / NBRC 14893 / NCIMB 12804 / NRRL 8165 / MA-4680).